Here is a 506-residue protein sequence, read N- to C-terminus: Tyrosine-protein kinase FRK (506 aa).

Positions 43-111 (SQGQYFVALF…PSNYVAEDRS (69 aa)) constitute an SH3 domain. Residues 117–209 (WFFGAIKRAD…GLCVKLEKPC (93 aa)) form the SH2 domain. Position 179 is a phosphothreonine (Thr-179). The region spanning 235-492 (IQLLKRLGSG…TLHWKLEDYF (258 aa)) is the Protein kinase domain. Residues 241–249 (LGSGQFGEV) and Lys-263 contribute to the ATP site. Residue Asp-355 is the Proton acceptor of the active site. Tyr-388 carries the phosphotyrosine; by autocatalysis modification.

It belongs to the protein kinase superfamily. Tyr protein kinase family. SRC subfamily. As to quaternary structure, interacts (via the SH3-domain) with PTEN. Interacts with RB1. Highly expressed in stomach, small intestine and colon. Concentrated in the brush border membranes of epithelial cells, throughout the maturation axis of the adult small intestine.

The protein localises to the cytoplasm. Its subcellular location is the nucleus. It carries out the reaction L-tyrosyl-[protein] + ATP = O-phospho-L-tyrosyl-[protein] + ADP + H(+). Its function is as follows. Non-receptor tyrosine-protein kinase that negatively regulates cell proliferation. Positively regulates PTEN protein stability through phosphorylation of PTEN on 'Tyr-336', which in turn prevents its ubiquitination and degradation, possibly by reducing its binding to NEDD4. May function as a tumor suppressor. This Rattus norvegicus (Rat) protein is Tyrosine-protein kinase FRK (Frk).